The following is a 360-amino-acid chain: DNA replication and repair protein RecF (360 aa).

30–37 (GANGSGKT) contacts ATP.

This sequence belongs to the RecF family.

The protein resides in the cytoplasm. Its function is as follows. The RecF protein is involved in DNA metabolism; it is required for DNA replication and normal SOS inducibility. RecF binds preferentially to single-stranded, linear DNA. It also seems to bind ATP. The sequence is that of DNA replication and repair protein RecF from Acinetobacter baumannii (strain AB307-0294).